Reading from the N-terminus, the 535-residue chain is Glutamate--cysteine ligase (535 aa).

It belongs to the glutamate--cysteine ligase type 1 family. Type 1 subfamily.

It catalyses the reaction L-cysteine + L-glutamate + ATP = gamma-L-glutamyl-L-cysteine + ADP + phosphate + H(+). The protein operates within sulfur metabolism; glutathione biosynthesis; glutathione from L-cysteine and L-glutamate: step 1/2. The polypeptide is Glutamate--cysteine ligase (Pseudomonas syringae pv. syringae (strain B728a)).